Consider the following 403-residue polypeptide: S-adenosylmethionine synthase (403 aa).

Residue histidine 17 participates in ATP binding. Aspartate 19 provides a ligand contact to Mg(2+). Glutamate 45 is a K(+) binding site. L-methionine is bound by residues glutamate 58 and glutamine 104. The segment at 104–114 (QSPDIAQGVDT) is flexible loop. Residues 179-181 (DGK), 250-251 (KF), aspartate 259, 265-266 (RK), alanine 282, and lysine 286 contribute to the ATP site. Aspartate 259 contacts L-methionine. Position 290 (lysine 290) interacts with L-methionine.

Belongs to the AdoMet synthase family. Homotetramer; dimer of dimers. It depends on Mg(2+) as a cofactor. Requires K(+) as cofactor.

It localises to the cytoplasm. It catalyses the reaction L-methionine + ATP + H2O = S-adenosyl-L-methionine + phosphate + diphosphate. Its pathway is amino-acid biosynthesis; S-adenosyl-L-methionine biosynthesis; S-adenosyl-L-methionine from L-methionine: step 1/1. In terms of biological role, catalyzes the formation of S-adenosylmethionine (AdoMet) from methionine and ATP. The overall synthetic reaction is composed of two sequential steps, AdoMet formation and the subsequent tripolyphosphate hydrolysis which occurs prior to release of AdoMet from the enzyme. The sequence is that of S-adenosylmethionine synthase from Mycobacterium tuberculosis (strain ATCC 25177 / H37Ra).